Consider the following 310-residue polypeptide: Alpha/beta hydrolase domain-containing protein 17A (310 aa).

A disordered region spans residues 38–61 (VPEPEPGPGGAGAAPSGPLRTSAA). Residues Ser-190, Asp-255, and His-284 each act as charge relay system in the active site. Ser-307 is modified (phosphoserine).

It belongs to the AB hydrolase superfamily. ABHD17 family. In terms of processing, palmitoylated on cysteine residues located in a cysteine cluster at the N-terminus which promotes membrane localization. Palmitoylation is required for post-synaptic localization and for depalmitoylating activity towards DLG4/PSD95.

The protein resides in the cell membrane. It localises to the endosome membrane. It is found in the cell projection. The protein localises to the dendritic spine. Its subcellular location is the postsynaptic density membrane. The enzyme catalyses S-hexadecanoyl-L-cysteinyl-[protein] + H2O = L-cysteinyl-[protein] + hexadecanoate + H(+). Its function is as follows. Hydrolyzes fatty acids from S-acylated cysteine residues in proteins. Has depalmitoylating activity towards NRAS. Has depalmitoylating activity towards DLG4/PSD95. May have depalmitoylating activity towars MAP6. This Mus musculus (Mouse) protein is Alpha/beta hydrolase domain-containing protein 17A.